The following is a 234-amino-acid chain: Purine nucleoside phosphorylase DeoD-type (234 aa).

An a purine D-ribonucleoside-binding site is contributed by histidine 4. Phosphate is bound by residues glycine 20, arginine 24, arginine 43, and 87–90; that span reads RIGS. A purine D-ribonucleoside contacts are provided by residues glutamate 162, 179 to 181, and 203 to 204; these read EME and SD. Catalysis depends on aspartate 204, which acts as the Proton donor.

The protein belongs to the PNP/UDP phosphorylase family. As to quaternary structure, homohexamer; trimer of homodimers.

It carries out the reaction a purine D-ribonucleoside + phosphate = a purine nucleobase + alpha-D-ribose 1-phosphate. The enzyme catalyses a purine 2'-deoxy-D-ribonucleoside + phosphate = a purine nucleobase + 2-deoxy-alpha-D-ribose 1-phosphate. In terms of biological role, catalyzes the reversible phosphorolytic breakdown of the N-glycosidic bond in the beta-(deoxy)ribonucleoside molecules, with the formation of the corresponding free purine bases and pentose-1-phosphate. The polypeptide is Purine nucleoside phosphorylase DeoD-type (Jannaschia sp. (strain CCS1)).